The following is a 148-amino-acid chain: Lysozyme C (148 aa).

An N-terminal signal peptide occupies residues 1-18 (MKVLVILGLVLLSVMVQG). The region spanning 19–148 (KVFERCELAR…VSQYVQGCGV (130 aa)) is the C-type lysozyme domain. 4 disulfides stabilise this stretch: Cys-24–Cys-146, Cys-48–Cys-134, Cys-83–Cys-99, and Cys-95–Cys-113. Active-site residues include Glu-53 and Asp-71.

It belongs to the glycosyl hydrolase 22 family. As to quaternary structure, monomer.

It is found in the secreted. It carries out the reaction Hydrolysis of (1-&gt;4)-beta-linkages between N-acetylmuramic acid and N-acetyl-D-glucosamine residues in a peptidoglycan and between N-acetyl-D-glucosamine residues in chitodextrins.. In terms of biological role, lysozymes have primarily a bacteriolytic function; those in tissues and body fluids are associated with the monocyte-macrophage system and enhance the activity of immunoagents. The polypeptide is Lysozyme C (LYZ) (Saimiri sciureus (Common squirrel monkey)).